We begin with the raw amino-acid sequence, 402 residues long: 4-hydroxy-3-methylbut-2-enyl diphosphate reductase (402 aa).

Cys-66 is a binding site for [4Fe-4S] cluster. (2E)-4-hydroxy-3-methylbut-2-enyl diphosphate is bound at residue His-96. His-96 provides a ligand contact to dimethylallyl diphosphate. Position 96 (His-96) interacts with isopentenyl diphosphate. Cys-157 provides a ligand contact to [4Fe-4S] cluster. His-185 provides a ligand contact to (2E)-4-hydroxy-3-methylbut-2-enyl diphosphate. His-185 lines the dimethylallyl diphosphate pocket. Residue His-185 participates in isopentenyl diphosphate binding. Residue Glu-187 is the Proton donor of the active site. Thr-250 is a (2E)-4-hydroxy-3-methylbut-2-enyl diphosphate binding site. Cys-288 lines the [4Fe-4S] cluster pocket. Positions 317, 318, 319, and 379 each coordinate (2E)-4-hydroxy-3-methylbut-2-enyl diphosphate. The dimethylallyl diphosphate site is built by Ser-317, Ser-318, Asn-319, and Ser-379. Isopentenyl diphosphate-binding residues include Ser-317, Ser-318, Asn-319, and Ser-379.

This sequence belongs to the IspH family. [4Fe-4S] cluster serves as cofactor.

It carries out the reaction isopentenyl diphosphate + 2 oxidized [2Fe-2S]-[ferredoxin] + H2O = (2E)-4-hydroxy-3-methylbut-2-enyl diphosphate + 2 reduced [2Fe-2S]-[ferredoxin] + 2 H(+). The catalysed reaction is dimethylallyl diphosphate + 2 oxidized [2Fe-2S]-[ferredoxin] + H2O = (2E)-4-hydroxy-3-methylbut-2-enyl diphosphate + 2 reduced [2Fe-2S]-[ferredoxin] + 2 H(+). It functions in the pathway isoprenoid biosynthesis; dimethylallyl diphosphate biosynthesis; dimethylallyl diphosphate from (2E)-4-hydroxy-3-methylbutenyl diphosphate: step 1/1. Its pathway is isoprenoid biosynthesis; isopentenyl diphosphate biosynthesis via DXP pathway; isopentenyl diphosphate from 1-deoxy-D-xylulose 5-phosphate: step 6/6. Its function is as follows. Catalyzes the conversion of 1-hydroxy-2-methyl-2-(E)-butenyl 4-diphosphate (HMBPP) into a mixture of isopentenyl diphosphate (IPP) and dimethylallyl diphosphate (DMAPP). Acts in the terminal step of the DOXP/MEP pathway for isoprenoid precursor biosynthesis. The protein is 4-hydroxy-3-methylbut-2-enyl diphosphate reductase of Gloeothece citriformis (strain PCC 7424) (Cyanothece sp. (strain PCC 7424)).